The following is a 362-amino-acid chain: Phosphoserine aminotransferase (362 aa).

2 residues coordinate L-glutamate: S9 and R42. Pyridoxal 5'-phosphate contacts are provided by residues 76 to 77 (GR), W102, T153, D174, and Q197. Residue K198 is modified to N6-(pyridoxal phosphate)lysine. 239 to 240 (NT) is a binding site for pyridoxal 5'-phosphate.

It belongs to the class-V pyridoxal-phosphate-dependent aminotransferase family. SerC subfamily. Homodimer. It depends on pyridoxal 5'-phosphate as a cofactor.

It is found in the cytoplasm. It carries out the reaction O-phospho-L-serine + 2-oxoglutarate = 3-phosphooxypyruvate + L-glutamate. It catalyses the reaction 4-(phosphooxy)-L-threonine + 2-oxoglutarate = (R)-3-hydroxy-2-oxo-4-phosphooxybutanoate + L-glutamate. It participates in amino-acid biosynthesis; L-serine biosynthesis; L-serine from 3-phospho-D-glycerate: step 2/3. It functions in the pathway cofactor biosynthesis; pyridoxine 5'-phosphate biosynthesis; pyridoxine 5'-phosphate from D-erythrose 4-phosphate: step 3/5. Catalyzes the reversible conversion of 3-phosphohydroxypyruvate to phosphoserine and of 3-hydroxy-2-oxo-4-phosphonooxybutanoate to phosphohydroxythreonine. This chain is Phosphoserine aminotransferase, found in Enterobacter sp. (strain 638).